The following is a 524-amino-acid chain: Bifunctional purine biosynthesis protein PurH (524 aa).

One can recognise an MGS-like domain in the interval 1-144 (MTRRALVSVS…KNSAHVGVVV (144 aa)).

The protein belongs to the PurH family.

It carries out the reaction (6R)-10-formyltetrahydrofolate + 5-amino-1-(5-phospho-beta-D-ribosyl)imidazole-4-carboxamide = 5-formamido-1-(5-phospho-D-ribosyl)imidazole-4-carboxamide + (6S)-5,6,7,8-tetrahydrofolate. It catalyses the reaction IMP + H2O = 5-formamido-1-(5-phospho-D-ribosyl)imidazole-4-carboxamide. It functions in the pathway purine metabolism; IMP biosynthesis via de novo pathway; 5-formamido-1-(5-phospho-D-ribosyl)imidazole-4-carboxamide from 5-amino-1-(5-phospho-D-ribosyl)imidazole-4-carboxamide (10-formyl THF route): step 1/1. It participates in purine metabolism; IMP biosynthesis via de novo pathway; IMP from 5-formamido-1-(5-phospho-D-ribosyl)imidazole-4-carboxamide: step 1/1. This chain is Bifunctional purine biosynthesis protein PurH, found in Anaeromyxobacter dehalogenans (strain 2CP-1 / ATCC BAA-258).